A 264-amino-acid polypeptide reads, in one-letter code: N-carbamoylsarcosine amidase (264 aa).

Cys-177 acts as the Nucleophile in catalysis. The disordered stretch occupies residues Thr-240–His-264.

In terms of assembly, homotetramer. It depends on sulfate as a cofactor.

The catalysed reaction is N-carbamoylsarcosine + H2O + 2 H(+) = sarcosine + NH4(+) + CO2. The protein operates within amine and polyamine degradation; creatinine degradation; sarcosine from creatinine: step 3/3. This chain is N-carbamoylsarcosine amidase, found in Arthrobacter sp.